Here is a 723-residue protein sequence, read N- to C-terminus: Polyribonucleotide nucleotidyltransferase (723 aa).

Positions 487 and 493 each coordinate Mg(2+). The region spanning 554 to 613 is the KH domain; sequence PKILIMHINPDKIREVIGPSGKQINKIIDETGVKIDIEQDGTIFISSVDEAANQKAKQII. Residues 623-691 enclose the S1 motif domain; it reads GQVYLGKVKR…KQGRVNLSRK (69 aa). The segment at 702-723 is disordered; that stretch reads GELPRESREKRGRRPERHRMKP. Positions 711 to 723 are enriched in basic residues; the sequence is KRGRRPERHRMKP.

It belongs to the polyribonucleotide nucleotidyltransferase family. The cofactor is Mg(2+).

Its subcellular location is the cytoplasm. It carries out the reaction RNA(n+1) + phosphate = RNA(n) + a ribonucleoside 5'-diphosphate. Its function is as follows. Involved in mRNA degradation. Catalyzes the phosphorolysis of single-stranded polyribonucleotides processively in the 3'- to 5'-direction. In Geobacillus kaustophilus (strain HTA426), this protein is Polyribonucleotide nucleotidyltransferase.